We begin with the raw amino-acid sequence, 316 residues long: 4-hydroxy-3-methylbut-2-enyl diphosphate reductase (316 aa).

Cys-12 contributes to the [4Fe-4S] cluster binding site. Positions 41 and 74 each coordinate (2E)-4-hydroxy-3-methylbut-2-enyl diphosphate. Residues His-41 and His-74 each coordinate dimethylallyl diphosphate. Positions 41 and 74 each coordinate isopentenyl diphosphate. Cys-96 contacts [4Fe-4S] cluster. Position 124 (His-124) interacts with (2E)-4-hydroxy-3-methylbut-2-enyl diphosphate. His-124 contributes to the dimethylallyl diphosphate binding site. His-124 contributes to the isopentenyl diphosphate binding site. Glu-126 serves as the catalytic Proton donor. A (2E)-4-hydroxy-3-methylbut-2-enyl diphosphate-binding site is contributed by Thr-167. [4Fe-4S] cluster is bound at residue Cys-197. (2E)-4-hydroxy-3-methylbut-2-enyl diphosphate is bound by residues Ser-225, Ser-226, Asn-227, and Ser-269. Dimethylallyl diphosphate-binding residues include Ser-225, Ser-226, Asn-227, and Ser-269. Residues Ser-225, Ser-226, Asn-227, and Ser-269 each coordinate isopentenyl diphosphate.

It belongs to the IspH family. As to quaternary structure, homodimer. [4Fe-4S] cluster is required as a cofactor.

It catalyses the reaction isopentenyl diphosphate + 2 oxidized [2Fe-2S]-[ferredoxin] + H2O = (2E)-4-hydroxy-3-methylbut-2-enyl diphosphate + 2 reduced [2Fe-2S]-[ferredoxin] + 2 H(+). It carries out the reaction dimethylallyl diphosphate + 2 oxidized [2Fe-2S]-[ferredoxin] + H2O = (2E)-4-hydroxy-3-methylbut-2-enyl diphosphate + 2 reduced [2Fe-2S]-[ferredoxin] + 2 H(+). It participates in isoprenoid biosynthesis; dimethylallyl diphosphate biosynthesis; dimethylallyl diphosphate from (2E)-4-hydroxy-3-methylbutenyl diphosphate: step 1/1. The protein operates within isoprenoid biosynthesis; isopentenyl diphosphate biosynthesis via DXP pathway; isopentenyl diphosphate from 1-deoxy-D-xylulose 5-phosphate: step 6/6. In terms of biological role, catalyzes the conversion of 1-hydroxy-2-methyl-2-(E)-butenyl 4-diphosphate (HMBPP) into a mixture of isopentenyl diphosphate (IPP) and dimethylallyl diphosphate (DMAPP). Acts in the terminal step of the DOXP/MEP pathway for isoprenoid precursor biosynthesis. The polypeptide is 4-hydroxy-3-methylbut-2-enyl diphosphate reductase (Escherichia coli O6:H1 (strain CFT073 / ATCC 700928 / UPEC)).